The following is a 267-amino-acid chain: 2-keto-3-deoxy-L-rhamnonate aldolase (267 aa).

The Proton acceptor role is filled by H49. Q151 contributes to the substrate binding site. Mg(2+) is bound at residue E153. Positions 178 and 179 each coordinate substrate. D179 lines the Mg(2+) pocket.

The protein belongs to the HpcH/HpaI aldolase family. KDR aldolase subfamily. In terms of assembly, homohexamer. Mg(2+) serves as cofactor.

It catalyses the reaction 2-dehydro-3-deoxy-L-rhamnonate = (S)-lactaldehyde + pyruvate. In terms of biological role, catalyzes the reversible retro-aldol cleavage of 2-keto-3-deoxy-L-rhamnonate (KDR) to pyruvate and lactaldehyde. The protein is 2-keto-3-deoxy-L-rhamnonate aldolase of Salmonella agona (strain SL483).